The primary structure comprises 238 residues: Large ribosomal subunit protein bL25 (238 aa).

Positions 1–10 (MATTVKELKA) are enriched in basic and acidic residues. The interval 1–24 (MATTVKELKATARPKSGKGAARAE) is disordered.

The protein belongs to the bacterial ribosomal protein bL25 family. CTC subfamily. Part of the 50S ribosomal subunit; part of the 5S rRNA/L5/L18/L25 subcomplex. Contacts the 5S rRNA. Binds to the 5S rRNA independently of L5 and L18.

This is one of the proteins that binds to the 5S RNA in the ribosome where it forms part of the central protuberance. In Bradyrhizobium diazoefficiens (strain JCM 10833 / BCRC 13528 / IAM 13628 / NBRC 14792 / USDA 110), this protein is Large ribosomal subunit protein bL25.